Consider the following 161-residue polypeptide: Putative pre-16S rRNA nuclease (161 aa).

The interval 141-161 (AAGSPPGALVPRNRVDPDRHA) is disordered.

This sequence belongs to the YqgF nuclease family.

The protein resides in the cytoplasm. In terms of biological role, could be a nuclease involved in processing of the 5'-end of pre-16S rRNA. The chain is Putative pre-16S rRNA nuclease from Clavibacter michiganensis subsp. michiganensis (strain NCPPB 382).